We begin with the raw amino-acid sequence, 749 residues long: MARGNRRNGSRRGSGTTGSSGSSRGRNNKNRGRGGSSSTSRRAANGGKRAGAGKFNAPELMDLDFGAIDDVNMGTGSMRSLSKRPGRNTMMQEAFLTSKHTDRFVGEPLRKRPIEFIKAKEVYDPRAILEKVINKDEANDADEATDITVSLRETTIAEQNEDNVNLDHDENEKENEKEDVEDQKPVEKDEESKDNLEGLREAIENDEKVKSAKIDDETLEQPTIEMEDSDNEDDSQSDSEGFFIDTSAQPTNSPPAYVPPNDIGPNIDYDPVLTIGNVQLHTSGAGNDITASVRSSTHHDELDSLDEFSDSESDEDAYADYIRQLNEQDSSEELSSSDSENESASTDANVSSTNSPQIVEYGFLSEDYEFDVSQISVTNVRFGIKNQFYSRCLELTGSVDDYMWVDEDDLIDFVTSKGVKEHRLESFLSYITNGMINKTENDEEEEQEVYVSSDSESDREIYGGTAPEIEEDDDGIADLVAFSKSSTKFRDTIDTSAVGTTGKGSRKQLDLERFAQYELDDDIIDSLQQQYKIRRESKKSKKQQHQDELMEEGLNKYNLLLKYPYTLHIKDIKDEFESFLHNPARDDLSFPPLDPHGNKTLTKMAKCYNCKSATQGKGIRRYIRVSKYKRTFKYLPDYGHINAILRQRPVFNRVDQKRPKEEYIATDGNATKDRIRQRNKSGHNAYIPEGHIVGGMAPEIDHTNVGRQLLEKLGWVKGEGLGAHGNKGISEPLVATVKKSKTGLGQTRY.

Basic residues predominate over residues 1–10 (MARGNRRNGS). Disordered stretches follow at residues 1–56 (MARG…GKFN), 153–265 (ETTI…DIGP), 289–315 (ITAS…ESDE), 327–353 (EQDS…VSST), and 441–461 (NDEE…DREI). Low complexity-rich tracts occupy residues 11 to 25 (RRGS…SSRG) and 36 to 56 (SSST…GKFN). Over residues 165–216 (NLDHDENEKENEKEDVEDQKPVEKDEESKDNLEGLREAIENDEKVKSAKIDD) the composition is skewed to basic and acidic residues. Acidic residues-rich tracts occupy residues 225 to 237 (EMED…DSQS) and 303 to 315 (DSLD…ESDE). A compositionally biased stretch (low complexity) spans 327 to 338 (EQDSSEELSSSD). Residues 344-353 (ASTDANVSST) are compositionally biased toward polar residues. Positions 566 to 629 (TLHIKDIKDE…RRYIRVSKYK (64 aa)) constitute an R3H domain. Positions 702 to 749 (HTNVGRQLLEKLGWVKGEGLGAHGNKGISEPLVATVKKSKTGLGQTRY) constitute a G-patch domain.

It belongs to the SQS1 family.

The protein resides in the cytoplasm. It localises to the nucleus. May be involved in splicing. The polypeptide is Protein SQS1 (SQS1) (Meyerozyma guilliermondii (strain ATCC 6260 / CBS 566 / DSM 6381 / JCM 1539 / NBRC 10279 / NRRL Y-324) (Yeast)).